Consider the following 457-residue polypeptide: Siroheme synthase (457 aa).

Positions 1-204 are precorrin-2 dehydrogenase /sirohydrochlorin ferrochelatase; it reads MDHLPIFCQL…NDQKAITETT (204 aa). NAD(+)-binding positions include 22–23 and 43–44; these read DV and LA. A Phosphoserine modification is found at S128. The segment at 216-457 is uroporphyrinogen-III C-methyltransferase; sequence GEVVLVGAGP…RDKLNWFSNH (242 aa). An S-adenosyl-L-methionine-binding site is contributed by P225. The Proton acceptor role is filled by D248. K270 serves as the catalytic Proton donor. Residues 301 to 303, I306, 331 to 332, M382, and G411 each bind S-adenosyl-L-methionine; these read GGD and TA.

The protein in the N-terminal section; belongs to the precorrin-2 dehydrogenase / sirohydrochlorin ferrochelatase family. In the C-terminal section; belongs to the precorrin methyltransferase family.

The catalysed reaction is uroporphyrinogen III + 2 S-adenosyl-L-methionine = precorrin-2 + 2 S-adenosyl-L-homocysteine + H(+). It catalyses the reaction precorrin-2 + NAD(+) = sirohydrochlorin + NADH + 2 H(+). The enzyme catalyses siroheme + 2 H(+) = sirohydrochlorin + Fe(2+). It participates in cofactor biosynthesis; adenosylcobalamin biosynthesis; precorrin-2 from uroporphyrinogen III: step 1/1. The protein operates within cofactor biosynthesis; adenosylcobalamin biosynthesis; sirohydrochlorin from precorrin-2: step 1/1. It functions in the pathway porphyrin-containing compound metabolism; siroheme biosynthesis; precorrin-2 from uroporphyrinogen III: step 1/1. Its pathway is porphyrin-containing compound metabolism; siroheme biosynthesis; siroheme from sirohydrochlorin: step 1/1. It participates in porphyrin-containing compound metabolism; siroheme biosynthesis; sirohydrochlorin from precorrin-2: step 1/1. Multifunctional enzyme that catalyzes the SAM-dependent methylations of uroporphyrinogen III at position C-2 and C-7 to form precorrin-2 via precorrin-1. Then it catalyzes the NAD-dependent ring dehydrogenation of precorrin-2 to yield sirohydrochlorin. Finally, it catalyzes the ferrochelation of sirohydrochlorin to yield siroheme. The sequence is that of Siroheme synthase from Escherichia coli O7:K1 (strain IAI39 / ExPEC).